We begin with the raw amino-acid sequence, 261 residues long: Non-structural protein 2a (261 aa).

It belongs to the coronaviruses ns2a protein family.

The protein resides in the host cytoplasm. Its function is as follows. Not essential for virus replication in transformed murine cells. The protein is Non-structural protein 2a of Mus musculus (Mouse).